A 561-amino-acid chain; its full sequence is Potassium-transporting ATPase potassium-binding subunit (561 aa).

Transmembrane regions (helical) follow at residues glycine 2–leucine 22, tyrosine 65–histidine 85, alanine 135–isoleucine 155, isoleucine 177–threonine 197, phenylalanine 253–phenylalanine 273, alanine 280–threonine 300, phenylalanine 327–valine 347, alanine 353–glycine 373, glycine 378–glycine 398, isoleucine 413–isoleucine 433, leucine 482–leucine 502, and alanine 531–isoleucine 551.

This sequence belongs to the KdpA family. In terms of assembly, the system is composed of three essential subunits: KdpA, KdpB and KdpC.

The protein resides in the cell membrane. Part of the high-affinity ATP-driven potassium transport (or Kdp) system, which catalyzes the hydrolysis of ATP coupled with the electrogenic transport of potassium into the cytoplasm. This subunit binds the extracellular potassium ions and delivers the ions to the membrane domain of KdpB through an intramembrane tunnel. The chain is Potassium-transporting ATPase potassium-binding subunit from Anabaena sp. (strain L31).